We begin with the raw amino-acid sequence, 436 residues long: GTPase Obg (436 aa).

Positions 2–160 constitute an Obg domain; the sequence is SMFLDTAKIK…RELQLELKIL (159 aa). The 178-residue stretch at 161 to 338 folds into the OBG-type G domain; the sequence is ADVGLVGFPS…LLDATAELLD (178 aa). GTP contacts are provided by residues 167-174, 192-196, 214-217, 284-287, and 319-321; these read GFPSVGKS, FTTIV, DLPG, NKMD, and SGL. Residues Ser-174 and Thr-194 each coordinate Mg(2+). Positions 358-436 constitute an OCT domain; that stretch reads GFDEEEKAFE…IGKFEFEFVD (79 aa).

Belongs to the TRAFAC class OBG-HflX-like GTPase superfamily. OBG GTPase family. As to quaternary structure, monomer. It depends on Mg(2+) as a cofactor.

Its subcellular location is the cytoplasm. In terms of biological role, an essential GTPase which binds GTP, GDP and possibly (p)ppGpp with moderate affinity, with high nucleotide exchange rates and a fairly low GTP hydrolysis rate. Plays a role in control of the cell cycle, stress response, ribosome biogenesis and in those bacteria that undergo differentiation, in morphogenesis control. The polypeptide is GTPase Obg (Streptococcus pneumoniae serotype 2 (strain D39 / NCTC 7466)).